The chain runs to 280 residues: Vitamin B12-binding protein (280 aa).

A signal peptide spans 1-27 (MMPLGLFPLPRAAAVLLISLLTLPAQA). The Fe/B12 periplasmic-binding domain occupies 30 to 277 (RVISLSPSTT…QMASIPTPVA (248 aa)). Cyanocob(III)alamin is bound at residue Tyr57. An intrachain disulfide couples Cys190 to Cys266.

The protein belongs to the BtuF family. In terms of assembly, the complex is composed of two ATP-binding proteins (BtuD), two transmembrane proteins (BtuC) and a solute-binding protein (BtuF).

It is found in the periplasm. Part of the ABC transporter complex BtuCDF involved in vitamin B12 import. Binds vitamin B12 and delivers it to the periplasmic surface of BtuC. In Yersinia pseudotuberculosis serotype O:3 (strain YPIII), this protein is Vitamin B12-binding protein.